A 143-amino-acid chain; its full sequence is MVLIIEIIKIGQIGPIGQRGQSGQRGQSGQRGQSGQIGQSGQSGQSGQIGQIGQIGQIGQIGQIGQIGQIGQIGQIGQIGQIGQIGQIGQIGQIGQARRTGRTGRTVHRRMLQASSSFNISPDISICRRATRNMGEEERPLGC.

29 G-Q-I/R/S repeats span residues 11–13 (GQI), 14–16 (GPI), 17–19 (GQR), 20–22 (GQS), 23–25 (GQR), 26–28 (GQS), 29–31 (GQR), 32–34 (GQS), 35–37 (GQI), 38–40 (GQS), 41–43 (GQS), 44–46 (GQS), 47–49 (GQI), 50–52 (GQI), 53–55 (GQI), 56–58 (GQI), 59–61 (GQI), 62–64 (GQI), 65–67 (GQI), 68–70 (GQI), 71–73 (GQI), 74–76 (GQI), 77–79 (GQI), 80–82 (GQI), 83–85 (GQI), 86–88 (GQI), 89–91 (GQI), 92–94 (GQI), and 95–97 (GQA). The 58-residue stretch at 11–68 (GQIGPIGQRGQSGQRGQSGQRGQSGQIGQSGQSGQSGQIGQIGQIGQIGQIGQIGQIG) folds into the Collagen-like domain. The interval 11 to 97 (GQIGPIGQRG…IGQIGQIGQA (87 aa)) is 29 X 3 AA approximate tandem repeats of G-Q-I/R/S. Residues 16 to 49 (IGQRGQSGQRGQSGQRGQSGQIGQSGQSGQSGQI) are disordered.

It localises to the secreted. Collagen-like protein; part of the subtelomeric hrmA-associated cluster (HAC) containing genes that alter the hyphal surface (such as reduced total chitin or increased beta-glucan exposure) and perturb inter-hyphal interactions within the developing biofilms, resulting in a loss of vertically aligned polarized growing filaments. Consequently, this hypoxia-typic morphotype (called H-MORPH) with altered biofilm architecture leads to increased hypoxia fitness, increased host inflammation, rapid disease progression, and mortality in a murine model of invasive aspergillosis. CgnA is directly involved in the reduction of total surface chitin and the increase of beta-glucan exposure, and mediates the detachment of the extracellular matrix and especially of its component galactosaminogalactan (GAG). This is Subtelomeric hrmA-associated cluster protein cgnA from Aspergillus fumigatus (strain ATCC MYA-4609 / CBS 101355 / FGSC A1100 / Af293) (Neosartorya fumigata).